The sequence spans 378 residues: Chaperone protein DnaJ (378 aa).

One can recognise a J domain in the interval 3 to 67; the sequence is DFYDTLGVNR…EKRARYDQFG (65 aa). The CR-type zinc finger occupies 132–214; sequence GQEREIKIPH…CGGQGVKQVR (83 aa). Zn(2+)-binding residues include cysteine 145, cysteine 148, cysteine 162, cysteine 165, cysteine 188, cysteine 191, cysteine 202, and cysteine 205. CXXCXGXG motif repeat units lie at residues 145-152, 162-169, 188-195, and 202-209; these read CDVCRGTG, CSTCGGAG, CPTCSGSG, and CQSCGGQG.

Belongs to the DnaJ family. Homodimer. Zn(2+) is required as a cofactor.

It localises to the cytoplasm. Functionally, participates actively in the response to hyperosmotic and heat shock by preventing the aggregation of stress-denatured proteins and by disaggregating proteins, also in an autonomous, DnaK-independent fashion. Unfolded proteins bind initially to DnaJ; upon interaction with the DnaJ-bound protein, DnaK hydrolyzes its bound ATP, resulting in the formation of a stable complex. GrpE releases ADP from DnaK; ATP binding to DnaK triggers the release of the substrate protein, thus completing the reaction cycle. Several rounds of ATP-dependent interactions between DnaJ, DnaK and GrpE are required for fully efficient folding. Also involved, together with DnaK and GrpE, in the DNA replication of plasmids through activation of initiation proteins. The chain is Chaperone protein DnaJ from Prochlorococcus marinus (strain SARG / CCMP1375 / SS120).